Reading from the N-terminus, the 172-residue chain is Small ribosomal subunit protein uS5 (172 aa).

An S5 DRBM domain is found at 17-80 (LREKMISVNR…EQARRNMFKV (64 aa)).

Belongs to the universal ribosomal protein uS5 family. Part of the 30S ribosomal subunit. Contacts proteins S4 and S8.

With S4 and S12 plays an important role in translational accuracy. In terms of biological role, located at the back of the 30S subunit body where it stabilizes the conformation of the head with respect to the body. This is Small ribosomal subunit protein uS5 from Burkholderia pseudomallei (strain 1106a).